The primary structure comprises 1338 residues: Terpene cyclase-glycosyl transferase fusion protein fsoA (1338 aa).

The segment at 1–687 (MDMAPDELDE…RFLDRTDEPD (687 aa)) is terpenne cyclase. 3 PFTB repeats span residues 19–61 (LEQA…PALN), 69–111 (AAAL…RLLG), and 267–307 (LRRC…SLEH). The active-site Proton donor is the aspartate 412. PFTB repeat units lie at residues 434 to 475 (VEMG…DSLV), 515 to 556 (AQKA…AFCG), and 564 to 615 (ALRA…LRFR). The segment at 688–1338 (QDRDLPLLMT…NMLLGEGCQG (651 aa)) is glycosyltransferase.

It in the N-terminal section; belongs to the terpene cyclase/mutase family. This sequence in the C-terminal section; belongs to the glycosyltransferase 28 family.

It catalyses the reaction (S)-2,3-epoxysqualene = isomotiol. The catalysed reaction is isomotiol + UDP-alpha-D-glucose = 3-O-(beta-D-glucopyranosyl)-isomotiol + UDP + H(+). It carries out the reaction 2alpha-hydroxyisomotiol + UDP-alpha-D-glucose = 3-O-(beta-D-glucopyranosyl)-2alpha-hydroxyisomotiol + UDP + H(+). The protein operates within secondary metabolite biosynthesis; terpenoid biosynthesis. In terms of biological role, terpene cyclase-glycosyl transferase fusion protein; part of the gene cluster that mediates the biosynthesis of the enfumafungin-type antibiotic, fuscoatroside. Within the pathway, fsoA plays two important roles, the cyclization of 2,3(S)-oxidosqualene into isomotiol via its terpene cyclase (TC) domain and the C3 glycosylation of several intermediates via its glycosyltransferase (GT) domain. The fuscoatroside biosynthesis is initiated by the cyclization of 2,3(S)-oxidosqualene through FsoA's TC domain, leading to the formation of the fernane skeleton isomotiol, harboring a fernane triterpene skeleton with a C8-C9 double bond. Subsequently, C2-alpha-hydroxylation mediated by fsoD results in the production of 2-alpha-hydroxy-isomotiol, which is further acetylated by fsoF. The GT domain of FsoA may convert isomotiol, 2-alpha-hydroxy-isomotiol, and the acetylated derivative of 2-alpha-hydroxy-isomotiol into their corresponding glycosides 3-O-(beta-D-glucopyranosyl)-isomotiol, 3-O-(beta-D-glucopyranosyl)-2-alpha-hydroxy-isomotiol, and 3-O-(beta-D-glucopyranosyl)-2-alpha-acetoxy-isomotiol, which then undergo oxidative cleavage under the action of fsoE to form s 2-deacetoxy-fuscoatroside, 2-deacetyl-fuscoatroside, and fuscoatroside, respectively. Although hydroxylation followed by acetylation of 3-O-(beta-D-glucopyranosyl)-isomotiol and 2-deacetoxy-fuscoatroside by fsoD and fsoF could not be ruled out, this process is likely to occur with difficulty due to bulky steric hindrance caused by the presence of a glycan at C3 in these compounds. Interestingly, fsoE can also utilize the aglycones isomotiol and 2-alpha-hydroxy-isomotiol as substrates to generate 19-beta-hydroxy-isomotiol and 2-alpha,19-beta-dihydroxy-isomotiol, respectively. These reactions occur with lower efficiency. Finally, fsoE can further convert 2-alpha,19-beta-dihydroxy-isomotiol into 2-alpha-hydroxy-ismotiol-19-one and 2-alpha-hydroxy-ismotiol-19-one into 2-deacetyl-3-deglucopyranosyl-fuscoatroside. This chain is Terpene cyclase-glycosyl transferase fusion protein fsoA, found in Humicola fuscoatra.